The following is a 330-amino-acid chain: Class III chitinase ARB_03514 (330 aa).

An N-terminal signal peptide occupies residues 1–22 (MSSVKNILSFVALFAGVKTAYA). The region spanning 23 to 314 (GLNSPGHNNV…SAVKGALSAG (292 aa)) is the GH18 domain. N-linked (GlcNAc...) asparagine glycans are attached at residues N61 and N135. The Proton donor role is filled by E155. 2 N-linked (GlcNAc...) asparagine glycosylation sites follow: N278 and N302.

Belongs to the glycosyl hydrolase 18 family. Chitinase class III subfamily. As to quaternary structure, monomer.

Its subcellular location is the secreted. It catalyses the reaction Random endo-hydrolysis of N-acetyl-beta-D-glucosaminide (1-&gt;4)-beta-linkages in chitin and chitodextrins.. Its function is as follows. Secreted chitinase involved in the degradation of chitin, a component of the cell walls of fungi and exoskeletal elements of some animals (including worms and arthropods). Plays a morphogenetic role during apical growth, cell division and differentiation (cell wall morphogenesis). This chain is Class III chitinase ARB_03514, found in Arthroderma benhamiae (strain ATCC MYA-4681 / CBS 112371) (Trichophyton mentagrophytes).